Reading from the N-terminus, the 215-residue chain is Large ribosomal subunit protein uL16 (215 aa).

Belongs to the universal ribosomal protein uL16 family. As to quaternary structure, component of the large ribosomal subunit.

It localises to the cytoplasm. Functionally, component of the large ribosomal subunit. Plays a role in the formation of actively translating ribosomes. Plays a role in the embryonic brain development. In Danio rerio (Zebrafish), this protein is Large ribosomal subunit protein uL16.